A 332-amino-acid chain; its full sequence is Holliday junction branch migration complex subunit RuvB (332 aa).

Residues 1-181 (MSRILDNEMM…FGITGHMEYY (181 aa)) are large ATPase domain (RuvB-L). ATP is bound by residues Leu20, Arg21, Gly62, Lys65, Thr66, Thr67, 128–130 (EDF), Arg171, Tyr181, and Arg218. Position 66 (Thr66) interacts with Mg(2+). A small ATPAse domain (RuvB-S) region spans residues 182 to 252 (AHADLTEIVE…ITDKALTMLD (71 aa)). Residues 255–332 (HEGLDYVDQK…EHLGYEYSEK (78 aa)) are head domain (RuvB-H). Positions 291, 310, 312, and 315 each coordinate DNA.

Belongs to the RuvB family. Homohexamer. Forms an RuvA(8)-RuvB(12)-Holliday junction (HJ) complex. HJ DNA is sandwiched between 2 RuvA tetramers; dsDNA enters through RuvA and exits via RuvB. An RuvB hexamer assembles on each DNA strand where it exits the tetramer. Each RuvB hexamer is contacted by two RuvA subunits (via domain III) on 2 adjacent RuvB subunits; this complex drives branch migration. In the full resolvosome a probable DNA-RuvA(4)-RuvB(12)-RuvC(2) complex forms which resolves the HJ.

The protein localises to the cytoplasm. The enzyme catalyses ATP + H2O = ADP + phosphate + H(+). Functionally, the RuvA-RuvB-RuvC complex processes Holliday junction (HJ) DNA during genetic recombination and DNA repair, while the RuvA-RuvB complex plays an important role in the rescue of blocked DNA replication forks via replication fork reversal (RFR). RuvA specifically binds to HJ cruciform DNA, conferring on it an open structure. The RuvB hexamer acts as an ATP-dependent pump, pulling dsDNA into and through the RuvAB complex. RuvB forms 2 homohexamers on either side of HJ DNA bound by 1 or 2 RuvA tetramers; 4 subunits per hexamer contact DNA at a time. Coordinated motions by a converter formed by DNA-disengaged RuvB subunits stimulates ATP hydrolysis and nucleotide exchange. Immobilization of the converter enables RuvB to convert the ATP-contained energy into a lever motion, pulling 2 nucleotides of DNA out of the RuvA tetramer per ATP hydrolyzed, thus driving DNA branch migration. The RuvB motors rotate together with the DNA substrate, which together with the progressing nucleotide cycle form the mechanistic basis for DNA recombination by continuous HJ branch migration. Branch migration allows RuvC to scan DNA until it finds its consensus sequence, where it cleaves and resolves cruciform DNA. The sequence is that of Holliday junction branch migration complex subunit RuvB from Streptococcus pneumoniae serotype 4 (strain ATCC BAA-334 / TIGR4).